The primary structure comprises 492 residues: Serine/threonine-protein kinase 3 (492 aa).

Residues 26 to 277 form the Protein kinase domain; it reads FDVLEKLGEG…ATQLLQHPFI (252 aa). Residues 32–40 and Lys55 each bind ATP; that span reads LGEGSYGSV. Asp145 functions as the Proton acceptor in the catalytic mechanism. At Thr179 the chain carries Phosphothreonine; by autocatalysis. Coiled coils occupy residues 286 to 328 and 443 to 476; these read LRDL…TMVK and NLDF…AKRQ. Residues 297-307 are compositionally biased toward basic and acidic residues; the sequence is KAKRQQEQQRE. Residues 297-339 form a disordered region; it reads KAKRQQEQQRELEEDDENSEEEVEVDSHTMVKSGSESAGTMRA. Residues 308-320 show a composition bias toward acidic residues; it reads LEEDDENSEEEVE. Positions 326–339 are enriched in polar residues; sequence MVKSGSESAGTMRA. An SARAH domain is found at 438-485; sequence FDFLKNLDFEELQMRLTALDPMMEREIEELRQRYTAKRQPILDAMDAK.

Belongs to the protein kinase superfamily. STE Ser/Thr protein kinase family. STE20 subfamily. In terms of assembly, homodimer; mediated via the coiled-coil region. It depends on Mg(2+) as a cofactor.

The protein localises to the cytoplasm. It is found in the nucleus. The enzyme catalyses L-seryl-[protein] + ATP = O-phospho-L-seryl-[protein] + ADP + H(+). The catalysed reaction is L-threonyl-[protein] + ATP = O-phospho-L-threonyl-[protein] + ADP + H(+). Its activity is regulated as follows. Inhibited by the C-terminal non-catalytic region. Activated by caspase-cleavage. Full activation also requires homodimerization and autophosphorylation of Thr-179. Functionally, stress-activated, pro-apoptotic kinase which, following caspase-cleavage, enters the nucleus and induces chromatin condensation followed by internucleosomal DNA fragmentation. Key component of the Hippo signaling pathway which plays a pivotal role in organ size control and tumor suppression by restricting proliferation and promoting apoptosis. The core of this pathway is composed of a kinase cascade wherein stk3/mst2 and stk4/mst1, in complex with its regulatory protein sav1, phosphorylates and activates lats1/2 in complex with its regulatory protein mob1, which in turn phosphorylates and inactivates yap1 oncoprotein and wwtr1/taz. Phosphorylation of yap1 by lats2 inhibits its translocation into the nucleus to regulate cellular genes important for cell proliferation, cell death, and cell migration. The protein is Serine/threonine-protein kinase 3 (stk3) of Danio rerio (Zebrafish).